The chain runs to 245 residues: 23S rRNA (guanosine-2'-O-)-methyltransferase RlmB (245 aa).

Residues glycine 197, isoleucine 217, and leucine 226 each contribute to the S-adenosyl-L-methionine site.

This sequence belongs to the class IV-like SAM-binding methyltransferase superfamily. RNA methyltransferase TrmH family. RlmB subfamily.

Its subcellular location is the cytoplasm. It catalyses the reaction guanosine(2251) in 23S rRNA + S-adenosyl-L-methionine = 2'-O-methylguanosine(2251) in 23S rRNA + S-adenosyl-L-homocysteine + H(+). Specifically methylates the ribose of guanosine 2251 in 23S rRNA. The polypeptide is 23S rRNA (guanosine-2'-O-)-methyltransferase RlmB (Photobacterium profundum (strain SS9)).